The following is a 717-amino-acid chain: Polyribonucleotide nucleotidyltransferase (717 aa).

Positions 487 and 493 each coordinate Mg(2+). The KH domain occupies 554–613 (PRITVINVPKDKIRDVIGTGGKVIREIVEYSGCKIDIEDDGTIKIAATSDEQAQKAIDRI). Residues 623 to 691 (GQIYTGKVVK…DRGKVKLSMR (69 aa)) form the S1 motif domain.

It belongs to the polyribonucleotide nucleotidyltransferase family. Requires Mg(2+) as cofactor.

The protein localises to the cytoplasm. The enzyme catalyses RNA(n+1) + phosphate = RNA(n) + a ribonucleoside 5'-diphosphate. Involved in mRNA degradation. Catalyzes the phosphorolysis of single-stranded polyribonucleotides processively in the 3'- to 5'-direction. The polypeptide is Polyribonucleotide nucleotidyltransferase (Acidiphilium cryptum (strain JF-5)).